A 494-amino-acid chain; its full sequence is Probable 26S proteasome non-ATPase regulatory subunit 3 (494 aa).

In terms of domain architecture, PCI spans alanine 247–aspartate 426. The interval proline 458 to phenylalanine 494 is disordered. Basic and acidic residues predominate over residues tyrosine 462–methionine 486.

The protein belongs to the proteasome subunit S3 family. As to quaternary structure, the 26S proteasome is composed of a core protease, known as the 20S proteasome, capped at one or both ends by the 19S regulatory complex (RC). The RC is composed of at least 18 different subunits in two subcomplexes, the base and the lid, which form the portions proximal and distal to the 20S proteolytic core, respectively. In terms of tissue distribution, blood (crystal) cells and cuticle.

In terms of biological role, acts as a regulatory subunit of the 26 proteasome which is involved in the ATP-dependent degradation of ubiquitinated proteins. This Drosophila melanogaster (Fruit fly) protein is Probable 26S proteasome non-ATPase regulatory subunit 3 (Rpn3).